The primary structure comprises 697 residues: MGERAGSPGTDQERKAGKHHYSYLSDFETPQSSGRSSLVSSSPASVRRKNPKRQTSDGQVHHQAPRKPSPKGLPNRKGVRVGFRSQSLNREPLRKDTDLVTKRILSARLLKINELQNEVSELQVKLAELLKENKSLKRLQYRQEKALNKFEDAENEISQLIFRHNNEITALKERLRKSQEKERATEKRVKDTESELFRTKFSLQKLKEISEARHLPERDDLAKKLVSAELKLDDTERRIKELSKNLELSTNSFQRQLLAERKRAYEAHDENKVLQKEVQRLYHKLKEKERELDIKNIYSNRLPKSSPNKEKELALRKNAACQSDFADLCTKGVQTMEDFKPEEYPLTPETIMCYENKWEEPGHLTLDLQSQKQDRHGEAGILNPIMEREEKFVTDEELHVVKQEVEKLEDEWEREELDKKQKEKASLLEREEKPEWETGRYQLGMYPIQNMDKLQGEEEERLKREMLLAKLNEIDRELQDSRNLKYPVLPLLPDFESKLHSPERSPKTYRFSESSERLFNGHHLQDISFSTPKGEGQNSGNVRSPASPNEFAFGSYVPSFAKTSERSNPFSQKSSFLDFQRNSMEKLSKDGVDLITRKEKKANLMEQLFGASGSSTISSKSSDPNSVASSKGDIDPLNFLPGNKGSRDQEHDEDEGFFLSEGRSFNPNRHRLKHADDKPAVKAADSVEDEIEEVALR.

Residues 1–90 (MGERAGSPGT…VGFRSQSLNR (90 aa)) are disordered. Residues S7 and S45 each carry the phosphoserine modification. A compositionally biased stretch (low complexity) spans 32–45 (SSGRSSLVSSSPAS). Coiled-coil stretches lie at residues 103–297 (RILS…IKNI) and 389–485 (EEKF…RNLK). Disordered stretches follow at residues 412–432 (WERE…EREE), 522–548 (HHLQ…PASP), and 606–697 (EQLF…VALR). Residues 416–432 (ELDKKQKEKASLLEREE) show a composition bias toward basic and acidic residues. The segment covering 527 to 547 (ISFSTPKGEGQNSGNVRSPAS) has biased composition (polar residues). The segment covering 612–626 (SGSSTISSKSSDPNS) has biased composition (low complexity). Positions 686–697 (SVEDEIEEVALR) are enriched in acidic residues.

Belongs to the LCA5 family. Interacts with NINL. Interacts with OFD1. Interacts with FAM161A. Interacts with components of the IFT complex B. Widely expressed.

The protein resides in the cytoplasm. It is found in the cytoskeleton. Its subcellular location is the cilium axoneme. It localises to the cilium basal body. The protein localises to the microtubule organizing center. The protein resides in the centrosome. It is found in the cell projection. Its subcellular location is the cilium. Its function is as follows. Involved in intraflagellar protein (IFT) transport in photoreceptor cilia. The sequence is that of Lebercilin (LCA5) from Homo sapiens (Human).